A 132-amino-acid chain; its full sequence is Small ribosomal subunit protein uS8 (132 aa).

This sequence belongs to the universal ribosomal protein uS8 family. In terms of assembly, part of the 30S ribosomal subunit. Contacts proteins S5 and S12.

Functionally, one of the primary rRNA binding proteins, it binds directly to 16S rRNA central domain where it helps coordinate assembly of the platform of the 30S subunit. In Ligilactobacillus salivarius (strain UCC118) (Lactobacillus salivarius), this protein is Small ribosomal subunit protein uS8.